The sequence spans 158 residues: Snaclec agglucetin subunit alpha-2 (158 aa).

The first 23 residues, 1–23, serve as a signal peptide directing secretion; sequence MGRFIFVSFGLLVVFLSLSGTGA. 3 disulfides stabilise this stretch: cysteine 27–cysteine 38, cysteine 55–cysteine 152, and cysteine 127–cysteine 144. Positions 34–153 constitute a C-type lectin domain; sequence YDQYCYQVIK…CIQLNPFVCK (120 aa).

This sequence belongs to the snaclec family. Heterotetramer of the subunits alpha-1, alpha-2, beta-1 and beta-2; disulfide-linked. In terms of tissue distribution, expressed by the venom gland.

The protein localises to the secreted. In terms of biological role, agglucetin specifically causes platelet aggregation and surface exposure of integrin alpha-IIb/beta-3 with a GPIb-(GP1BA-) dependent manner in washed platelets. It binds to human platelets in a saturable manner, and its binding is specifically blocked by anti-GP Ib mAb. It regulates endothelial cell survival and promotes angiogenesis by activating integrin alpha-v/beta-3 signaling through FAK/phosphatidylinositol 3-kinase (PI3K)/Akt pathway. In Deinagkistrodon acutus (Hundred-pace snake), this protein is Snaclec agglucetin subunit alpha-2.